The following is a 260-amino-acid chain: NifU-like protein C1709.19c (260 aa).

A nifU region spans residues 161-231; the sequence is IKELIETSIR…IPEVENVVQV (71 aa).

The protein belongs to the NifU family.

This chain is NifU-like protein C1709.19c, found in Schizosaccharomyces pombe (strain 972 / ATCC 24843) (Fission yeast).